Consider the following 420-residue polypeptide: Shaggy-related protein kinase delta (420 aa).

The segment at 1–61 (MESHLGNGVG…DIIDGVGAEP (61 aa)) is disordered. Over residues 10 to 26 (GSSRSAKNTKNTSSSVD) the composition is skewed to polar residues. Positions 28–41 (LSRDMLEMKIRDKT) are enriched in basic and acidic residues. Positions 42–53 (EADEERDSEPDI) are enriched in acidic residues. Positions 82–366 (YIAEHVVGTG…AVEACIHPFF (285 aa)) constitute a Protein kinase domain. ATP contacts are provided by residues 88-96 (VGTGSFGMV) and Lys-111. Asp-207 acts as the Proton acceptor in catalysis. Tyr-242 carries the post-translational modification Phosphotyrosine.

Belongs to the protein kinase superfamily. CMGC Ser/Thr protein kinase family. GSK-3 subfamily. Post-translationally, autophosphorylated mainly on threonine and serine residues.

The catalysed reaction is L-seryl-[protein] + ATP = O-phospho-L-seryl-[protein] + ADP + H(+). It catalyses the reaction L-threonyl-[protein] + ATP = O-phospho-L-threonyl-[protein] + ADP + H(+). Functionally, may mediate extracellular signals to regulate transcription in differentiating cells. This Arabidopsis thaliana (Mouse-ear cress) protein is Shaggy-related protein kinase delta (ASK4).